A 65-amino-acid chain; its full sequence is uncharacterized protein (65 aa).

A disordered region spans residues 1 to 22; the sequence is MEKETPQQETKQSTNKESGFFD. Over residues 7–17 the composition is skewed to polar residues; that stretch reads QQETKQSTNKE. Residues 22–65 adopt a coiled-coil conformation; it reads DEIIKRTNQLLEKEKELHEKYNKEITSQQDQIDQLKKKINQLKY.

This is an uncharacterized protein from Dictyostelium discoideum (Social amoeba).